The sequence spans 580 residues: MTSTGIRLHAPAPGWAIAADVVVVGSGVAGLTAALRCESAGLRTVVVTKARLDDGSTRWAQGGVAAALGEGDTPEQHLDDTLVAGAGLCDQDAVRILVTEGPDAVRRLIATGAHFDESTEGGLALTREGGHHRRRIAHAGGDATGAEISRALVEAVRARGLRTVENALVLDLLTDAEGRTAGVTLHVMGEGQHDGVGAVHAPAVVLATGGMGQVFSATTNPSVSTGDGVALALRAGAEVSDLEFVQFHPTVLFLGSDAEGQQPLVSEAVRGEGAHLVDADGVRFMQGRHELAELAPRDIVAKAITRRMQEHGADHMYLDARHFGRTMWEHRFPTILAACRAHGIDPVTEPVPVAPAAHYASGGVRTDAHGRTTVPGLYACGEVACTGVHGANRLASNSLLEGLVYAERIAADIAAAHTAGTLHARVPAPLPHPDHSQHPRHPLLPPEARLTIQRIMTEGAGVLRSADSLARAADRLHGLHAEAREALHEHGKTSEPGVDTWEATNLLCVARVLVAAAARREETRGCHWREDHADRDDTTWRRHVVVRLNPDRTLAVHTTDTPEFPPTVHGAQPTHRPQEQ.

FAD contacts are provided by residues 26-29 (SGVA), lysine 49, 56-63 (STRWAQGG), and aspartate 227. Arginine 297 functions as the Proton donor/acceptor in the catalytic mechanism. FAD-binding positions include glutamate 382 and 398-399 (SL). Residues 556–580 (VHTTDTPEFPPTVHGAQPTHRPQEQ) form a disordered region.

This sequence belongs to the FAD-dependent oxidoreductase 2 family. NadB subfamily. Requires FAD as cofactor.

Its subcellular location is the cytoplasm. The catalysed reaction is L-aspartate + O2 = iminosuccinate + H2O2. The protein operates within cofactor biosynthesis; NAD(+) biosynthesis; iminoaspartate from L-aspartate (oxidase route): step 1/1. In terms of biological role, catalyzes the oxidation of L-aspartate to iminoaspartate, the first step in the de novo biosynthesis of NAD(+). This chain is L-aspartate oxidase (nadB), found in Streptomyces coelicolor (strain ATCC BAA-471 / A3(2) / M145).